Consider the following 62-residue polypeptide: MDMKKLIERINFLYKKSKEEGLTKEEKVEQQKLRREYIDIIKGNVKVQLEGVEKIPKPNRKN.

This sequence belongs to the UPF0291 family.

The protein localises to the cytoplasm. In Clostridium botulinum (strain Kyoto / Type A2), this protein is UPF0291 protein CLM_2971.